We begin with the raw amino-acid sequence, 101 residues long: Putative pterin-4-alpha-carbinolamine dehydratase (101 aa).

This sequence belongs to the pterin-4-alpha-carbinolamine dehydratase family.

The enzyme catalyses (4aS,6R)-4a-hydroxy-L-erythro-5,6,7,8-tetrahydrobiopterin = (6R)-L-erythro-6,7-dihydrobiopterin + H2O. This is Putative pterin-4-alpha-carbinolamine dehydratase from Ralstonia pickettii (strain 12J).